Here is a 511-residue protein sequence, read N- to C-terminus: Bifunctional purine biosynthesis protein PurH (511 aa).

The region spanning 1–145 (MKKRALVSVS…KNHKFVSVIV (145 aa)) is the MGS-like domain.

The protein belongs to the PurH family.

The enzyme catalyses (6R)-10-formyltetrahydrofolate + 5-amino-1-(5-phospho-beta-D-ribosyl)imidazole-4-carboxamide = 5-formamido-1-(5-phospho-D-ribosyl)imidazole-4-carboxamide + (6S)-5,6,7,8-tetrahydrofolate. It carries out the reaction IMP + H2O = 5-formamido-1-(5-phospho-D-ribosyl)imidazole-4-carboxamide. Its pathway is purine metabolism; IMP biosynthesis via de novo pathway; 5-formamido-1-(5-phospho-D-ribosyl)imidazole-4-carboxamide from 5-amino-1-(5-phospho-D-ribosyl)imidazole-4-carboxamide (10-formyl THF route): step 1/1. It participates in purine metabolism; IMP biosynthesis via de novo pathway; IMP from 5-formamido-1-(5-phospho-D-ribosyl)imidazole-4-carboxamide: step 1/1. The chain is Bifunctional purine biosynthesis protein PurH from Bacillus cereus (strain 03BB102).